A 112-amino-acid polypeptide reads, in one-letter code: Serum amyloid A protein (112 aa).

Glutamine 1 carries the pyrrolidone carboxylic acid modification. Positions 75 to 86 (MTRDQVREDTKA) are enriched in basic and acidic residues. Positions 75 to 112 (MTRDQVREDTKADQFANEWGRSGKDPNHFRPPGLPDKY) are disordered.

This sequence belongs to the SAA family. In terms of tissue distribution, expressed by the liver; secreted in plasma.

The protein localises to the secreted. Its function is as follows. Major acute phase reactant. Apolipoprotein of the HDL complex. The chain is Serum amyloid A protein (SAA1) from Ovis aries (Sheep).